The chain runs to 635 residues: Nuclear distribution protein nudE homolog 1 (635 aa).

Residues 14–192 (EKEIKHWKSK…TILRDLVTRS (179 aa)) adopt a coiled-coil conformation. Disordered regions lie at residues 35–63 (ESSL…NKTI), 200–267 (TMAS…LSRD), 279–328 (VLDD…SARA), 389–504 (SRVV…DHDP), and 516–635 (AAQA…TETF). Residues 43 to 56 (ESSKELEQEMEKEL) are compositionally biased toward basic and acidic residues. Polar residues-rich tracts occupy residues 201 to 224 (MASS…SPIK) and 237 to 246 (SRQALSSPVT). The segment covering 280–299 (LDDSPTATTTSAAPTRSSTL) has biased composition (low complexity). Polar residues-rich tracts occupy residues 314–326 (ASTS…SPSA) and 411–428 (GSPS…TSTP). The segment covering 516 to 541 (AAQASVAKRRTSMSGSGMSHSASHGS) has biased composition (low complexity). Composition is skewed to polar residues over residues 547–571 (SGST…SSMT) and 580–619 (SKRT…PAQT). Over residues 620–635 (LSRSRSSSLGSETETF) the composition is skewed to low complexity.

Belongs to the nudE family. As to quaternary structure, self-associates. Interacts with PAC1.

Its subcellular location is the cytoplasm. It localises to the cytoskeleton. In terms of biological role, required for nuclear migration. This is Nuclear distribution protein nudE homolog 1 (NDE1) from Mycosarcoma maydis (Corn smut fungus).